Consider the following 154-residue polypeptide: Large ribosomal subunit protein bL17 (154 aa).

Residues 127-154 are disordered; it reads TAAKQDRAKRVKGSKKAETEKEGGESAE. Basic and acidic residues predominate over residues 141–154; the sequence is KKAETEKEGGESAE.

Belongs to the bacterial ribosomal protein bL17 family. In terms of assembly, part of the 50S ribosomal subunit. Contacts protein L32.

The chain is Large ribosomal subunit protein bL17 from Chlorobaculum parvum (strain DSM 263 / NCIMB 8327) (Chlorobium vibrioforme subsp. thiosulfatophilum).